The chain runs to 213 residues: Uridine kinase (213 aa).

Position 15–22 (15–22 (GASASGKS)) interacts with ATP.

Belongs to the uridine kinase family.

The protein resides in the cytoplasm. It catalyses the reaction uridine + ATP = UMP + ADP + H(+). The enzyme catalyses cytidine + ATP = CMP + ADP + H(+). The protein operates within pyrimidine metabolism; CTP biosynthesis via salvage pathway; CTP from cytidine: step 1/3. It functions in the pathway pyrimidine metabolism; UMP biosynthesis via salvage pathway; UMP from uridine: step 1/1. The sequence is that of Uridine kinase from Pectobacterium carotovorum subsp. carotovorum (strain PC1).